We begin with the raw amino-acid sequence, 1192 residues long: MPLQFMYGPASIDHLEGIADRVIELQQQNVGQPVYYLVPNHIKFQSEIQLLQKLRQRRDVKSHIFAEKDVQILSISRLAWFFLRNSSIYQYPRVTSSSSNMLLYRVILEHQDELTLFHNIDAQLGLVQKIATQLAEFKQGNVGPDELGRVAENIAENSDAGMDIKAKLHDLGIIYSAYEEEIQSRFIDASDITHTLTDELSKMDLSGQSFIISGFSNFTAEEMSLIQALMKANGNVVIDLIMDKFPLYEKVSENSLFFENEKIIFKFNAWAHENKVKSLEPVRLHRVRVNSDLLKLEKYWIESSEGQVGGSKQENNACVTIFQANSRYAEVEHVATLIRQKMAKDPSLKFSDFSVLTRHLSDYSTIIKPIFDQMELPIFYDLQIAMKDHPLLELINALFDIRAHHFRYEDVMRLLKTGLLFPETEDDPHGMDFFKSVHITENYVLKQGIYGDRWLQKKDWKYSRFNDIDEEKQTDEEIEINQRINTVKNYVAETVVPFFNQLSTATTGVEAAKALYDFLIKNGIDQCLLAWRDQWIEEGRLAKAAEPEQTWETFIQMLDEFVDILGDQPFDPDNFMGLLNAGFEGATYSQIPSTLDQILVSESGMVQMVDRKIVFIIGATDRVMPEQIQDNDFLNQDGKNQIDPFLDDDQFLRISNDRQMRQEPYLNYLTFMIGSDELIFSYPKSGNDGVELKISPYVERIGKHFGIIAQSLPSRPTTEPVRLDPPFIELFIGSNRSTLSHLIQYARAMHEAKSEADPRWNLIYTILRQSTLGSLTDQLLSSLEYKNIPEKLKPEIVEGLYGDTIYASVSKLEEFYRNEYSYFLKYGLKLQERETSDLSPADTGQYFHAAMDKLIKMITTENLNFNEVNQEQIEQIAKRLVQQMEQDQQFDQFNGTYRMGFLRKQLDRTVQAMVEAIFKQLARTRMRPIASEQLFGQIGSQSGLPALNFKVGEGKEINVRGKIDRIDKIEIGDKDYLGIVDYKSSNRKFDFTDAYYGLAMQMLMYLDVVQRNKEKIDPATKAEISSALYMIFQYPLLKSKEWKGSDANQLNQSIFKKFSLNGFLLKDEELIKEIDKTIEDTRKSDVFPIAFTTKGTLTKVSENSILSEDELQNLIKHAELKVREAGEKIFKGELDMNPVQWPNRRTVMEYSPYKDVMQFDAMLPENNYRIIEKLDKDKVLEQIREEQEKNGR.

This sequence belongs to the helicase family. AddB/RexB type 2 subfamily. In terms of assembly, heterodimer of AddA and RexB. Requires Mg(2+) as cofactor.

The heterodimer acts as both an ATP-dependent DNA helicase and an ATP-dependent, dual-direction single-stranded exonuclease. Recognizes the chi site generating a DNA molecule suitable for the initiation of homologous recombination. This subunit has 5' -&gt; 3' nuclease activity but not helicase activity. This is ATP-dependent helicase/deoxyribonuclease subunit B from Pediococcus pentosaceus (strain ATCC 25745 / CCUG 21536 / LMG 10740 / 183-1w).